The chain runs to 429 residues: Adenylosuccinate synthetase (429 aa).

Residues 12 to 18 and 40 to 42 contribute to the GTP site; these read GDEGKGK and GHT. The Proton acceptor role is filled by D13. Mg(2+) contacts are provided by D13 and G40. IMP-binding positions include 13–16, 38–41, T128, R142, Q223, T238, and R302; these read DEGK and NAGH. The active-site Proton donor is H41. Position 298–304 (298–304) interacts with substrate; it reads TTTGRAR. GTP contacts are provided by residues R304, 330–332, and 412–414; these read SID and SVG.

The protein belongs to the adenylosuccinate synthetase family. As to quaternary structure, homodimer. The cofactor is Mg(2+).

The protein localises to the cytoplasm. The catalysed reaction is IMP + L-aspartate + GTP = N(6)-(1,2-dicarboxyethyl)-AMP + GDP + phosphate + 2 H(+). It participates in purine metabolism; AMP biosynthesis via de novo pathway; AMP from IMP: step 1/2. Plays an important role in the de novo pathway of purine nucleotide biosynthesis. Catalyzes the first committed step in the biosynthesis of AMP from IMP. This chain is Adenylosuccinate synthetase, found in Oceanobacillus iheyensis (strain DSM 14371 / CIP 107618 / JCM 11309 / KCTC 3954 / HTE831).